The primary structure comprises 193 residues: NADH-quinone oxidoreductase subunit B (193 aa).

[4Fe-4S] cluster is bound by residues Cys72, Cys73, Cys137, and Cys167.

This sequence belongs to the complex I 20 kDa subunit family. As to quaternary structure, NDH-1 is composed of 14 different subunits. Subunits NuoB, C, D, E, F, and G constitute the peripheral sector of the complex. [4Fe-4S] cluster serves as cofactor.

It localises to the cell inner membrane. The enzyme catalyses a quinone + NADH + 5 H(+)(in) = a quinol + NAD(+) + 4 H(+)(out). Its function is as follows. NDH-1 shuttles electrons from NADH, via FMN and iron-sulfur (Fe-S) centers, to quinones in the respiratory chain. Couples the redox reaction to proton translocation (for every two electrons transferred, four hydrogen ions are translocated across the cytoplasmic membrane), and thus conserves the redox energy in a proton gradient. The protein is NADH-quinone oxidoreductase subunit B of Brucella anthropi (strain ATCC 49188 / DSM 6882 / CCUG 24695 / JCM 21032 / LMG 3331 / NBRC 15819 / NCTC 12168 / Alc 37) (Ochrobactrum anthropi).